The following is an 85-amino-acid chain: Colicin-E6 immunity protein (85 aa).

This sequence belongs to the cloacin immunity protein family.

Its function is as follows. This protein inhibits the 16S RNA hydrolyzing activity of colicin E6 by binding with high affinity to the C-terminal catalytic domain of E6. This protein is able to protect a cell, which harbors the plasmid ColE6 against colicin E6. This Escherichia coli protein is Colicin-E6 immunity protein (imm).